Here is a 447-residue protein sequence, read N- to C-terminus: ATP synthase subunit beta (447 aa).

147-154 contributes to the ATP binding site; that stretch reads GGAGVGKT.

It belongs to the ATPase alpha/beta chains family. In terms of assembly, F-type ATPases have 2 components, CF(1) - the catalytic core - and CF(0) - the membrane proton channel. CF(1) has five subunits: alpha(3), beta(3), gamma(1), delta(1), epsilon(1). CF(0) has three main subunits: a(1), b(2) and c(9-12). The alpha and beta chains form an alternating ring which encloses part of the gamma chain. CF(1) is attached to CF(0) by a central stalk formed by the gamma and epsilon chains, while a peripheral stalk is formed by the delta and b chains.

It is found in the cell membrane. The enzyme catalyses ATP + H2O + 4 H(+)(in) = ADP + phosphate + 5 H(+)(out). Functionally, produces ATP from ADP in the presence of a proton gradient across the membrane. The catalytic sites are hosted primarily by the beta subunits. The polypeptide is ATP synthase subunit beta (Carsonella ruddii (strain PV)).